The sequence spans 416 residues: Queuine tRNA-ribosyltransferase accessory subunit 2 (416 aa).

C350, C352, C355, and H381 together coordinate Zn(2+).

The protein belongs to the queuine tRNA-ribosyltransferase family. QTRT2 subfamily. Heterodimer of a catalytic subunit qtrt1 and an accessory subunit qtrt2. Zn(2+) serves as cofactor.

It localises to the cytoplasm. The protein resides in the mitochondrion outer membrane. Functionally, non-catalytic subunit of the queuine tRNA-ribosyltransferase (TGT) that catalyzes the base-exchange of a guanine (G) residue with queuine (Q) at position 34 (anticodon wobble position) in tRNAs with GU(N) anticodons (tRNA-Asp, -Asn, -His and -Tyr), resulting in the hypermodified nucleoside queuosine (7-(((4,5-cis-dihydroxy-2-cyclopenten-1-yl)amino)methyl)-7-deazaguanosine). The protein is Queuine tRNA-ribosyltransferase accessory subunit 2 of Danio rerio (Zebrafish).